A 654-amino-acid chain; its full sequence is Threonine--tRNA ligase (654 aa).

Positions 1-63 constitute a TGS domain; it reads MAQISLTFPD…DADASIAIHT (63 aa). The interval 247–544 is catalytic; it reads DHRKLGREMN…LIENFAGKLP (298 aa). Zn(2+) contacts are provided by cysteine 344, histidine 395, and histidine 521.

It belongs to the class-II aminoacyl-tRNA synthetase family. Homodimer. It depends on Zn(2+) as a cofactor.

The protein resides in the cytoplasm. It carries out the reaction tRNA(Thr) + L-threonine + ATP = L-threonyl-tRNA(Thr) + AMP + diphosphate + H(+). In terms of biological role, catalyzes the attachment of threonine to tRNA(Thr) in a two-step reaction: L-threonine is first activated by ATP to form Thr-AMP and then transferred to the acceptor end of tRNA(Thr). Also edits incorrectly charged L-seryl-tRNA(Thr). The protein is Threonine--tRNA ligase of Dinoroseobacter shibae (strain DSM 16493 / NCIMB 14021 / DFL 12).